The following is a 419-amino-acid chain: Acyl transferase 9 (419 aa).

Catalysis depends on proton acceptor residues His161 and Asp362.

Belongs to the plant acyltransferase family.

Its function is as follows. Involved in the incorporation of ferulate into the cell wall. May act as arabinoxylan feruloyl transferase. The polypeptide is Acyl transferase 9 (Oryza sativa subsp. japonica (Rice)).